The following is a 466-amino-acid chain: Transcription factor SOX-10 (466 aa).

Disordered regions lie at residues 1-67, 160-200, 213-275, 344-375, and 433-466; these read MAEE…DDDK, LRMQ…QGGA, DHRH…DFGN, TVSP…QPST, and RPLY…LSRP. Over residues 23–32 the composition is skewed to low complexity; it reads LSPGSAPSLG. Phosphoserine is present on S24. The interval 62–102 is dimerization (DIM); that stretch reads EADDDKFPVCIREAVSQVLSGYDWTLVPMPVRVNGASKSKP. A DNA-binding region (HMG box) is located at residues 104–172; the sequence is VKRPMNAFMV…QHKKDHPDYK (69 aa). The span at 160–173 shows a compositional bias: basic and acidic residues; that stretch reads LRMQHKKDHPDYKY. Positions 183 to 200 are enriched in low complexity; it reads AAQGEAECPGGEAEQGGA. The tract at residues 228–310 is transactivation domain (TAM); the sequence is PEHPSGQSHG…LPPNGHPGHV (83 aa). Positions 254–271 are enriched in basic and acidic residues; that stretch reads ADPKRDGRSLGEGGKPHI. The segment at 353–466 is transactivation domain (TAC); that stretch reads KAQVKTETTG…QPVYTTLSRP (114 aa). Positions 440-466 are enriched in polar residues; sequence SDPSPSGPQSHSPTHWEQPVYTTLSRP.

Monomer. Interacts with Armcx3 at the mitochondrial outer membrane surface. Interacts with PAX3. In terms of tissue distribution, expressed in oligodendroglia of the spinal tube (at protein level).

Its subcellular location is the cytoplasm. The protein resides in the nucleus. It is found in the mitochondrion outer membrane. Transcription factor that plays a central role in developing and mature glia. Specifically activates expression of myelin genes, during oligodendrocyte (OL) maturation, such as DUSP15 and MYRF, thereby playing a central role in oligodendrocyte maturation and CNS myelination. Once induced, MYRF cooperates with SOX10 to implement the myelination program. Transcriptional activator of MITF, acting synergistically with PAX3. Transcriptional activator of MBP, via binding to the gene promoter. The protein is Transcription factor SOX-10 (Sox10) of Mus musculus (Mouse).